We begin with the raw amino-acid sequence, 504 residues long: Signal transduction histidine-protein kinase/phosphatase MprB (504 aa).

At Met-1–Leu-26 the chain is on the cytoplasmic side. Residues Leu-27–Ile-47 traverse the membrane as a helical segment. The Extracellular segment spans residues Ser-48 to Arg-163. A helical membrane pass occupies residues Trp-164–Val-184. Over Thr-185–Thr-504 the chain is Cytoplasmic. The 53-residue stretch at Arg-186–Glu-238 folds into the HAMP domain. The Histidine kinase domain maps to Asp-246–Arg-466. Position 249 is a phosphohistidine; by autocatalysis (His-249). A disordered region spans residues Gln-471 to Thr-504. The span at Ser-487–Thr-504 shows a compositional bias: polar residues.

The cofactor is Mg(2+). Mn(2+) is required as a cofactor. Post-translationally, autophosphorylated.

It localises to the cell membrane. It catalyses the reaction ATP + protein L-histidine = ADP + protein N-phospho-L-histidine.. In terms of biological role, member of the two-component regulatory system MprB/MprA which contributes to maintaining a balance among several systems involved in stress resistance and is required for establishment and maintenance of persistent infection in the host. In response to environmental signals MprB acts both as a membrane-associated protein kinase that undergoes autophosphorylation and subsequently transfers the phosphate to MprA, and a protein phosphatase that dephosphorylates phospho-MprA. This Mycobacterium tuberculosis (strain ATCC 25177 / H37Ra) protein is Signal transduction histidine-protein kinase/phosphatase MprB (mprB).